Consider the following 82-residue polypeptide: RNA-binding protein Hfq (82 aa).

Residues 9 to 69 (DHFLNQLRKE…ISTFSPARNV (61 aa)) enclose the Sm domain.

It belongs to the Hfq family. As to quaternary structure, homohexamer.

Its function is as follows. RNA chaperone that binds small regulatory RNA (sRNAs) and mRNAs to facilitate mRNA translational regulation in response to envelope stress, environmental stress and changes in metabolite concentrations. Also binds with high specificity to tRNAs. In Exiguobacterium sp. (strain ATCC BAA-1283 / AT1b), this protein is RNA-binding protein Hfq.